The following is a 279-amino-acid chain: Shikimate dehydrogenase (NADP(+)) (279 aa).

Shikimate contacts are provided by residues 20-22 and T67; that span reads SRS. The active-site Proton acceptor is K71. NADP(+) is bound at residue D83. Shikimate is bound by residues N92 and D108. NADP(+) contacts are provided by residues 134–138 and L223; that span reads GAGGA. Shikimate is bound at residue Y225. Residue G246 participates in NADP(+) binding.

Belongs to the shikimate dehydrogenase family. As to quaternary structure, homodimer.

It catalyses the reaction shikimate + NADP(+) = 3-dehydroshikimate + NADPH + H(+). The protein operates within metabolic intermediate biosynthesis; chorismate biosynthesis; chorismate from D-erythrose 4-phosphate and phosphoenolpyruvate: step 4/7. Its function is as follows. Involved in the biosynthesis of the chorismate, which leads to the biosynthesis of aromatic amino acids. Catalyzes the reversible NADPH linked reduction of 3-dehydroshikimate (DHSA) to yield shikimate (SA). This chain is Shikimate dehydrogenase (NADP(+)), found in Cereibacter sphaeroides (strain ATCC 17025 / ATH 2.4.3) (Rhodobacter sphaeroides).